A 262-amino-acid chain; its full sequence is tRNA (guanine-N(1)-)-methyltransferase (262 aa).

Residues Gly113 and 137 to 142 (IGDYVL) each bind S-adenosyl-L-methionine.

The protein belongs to the RNA methyltransferase TrmD family. As to quaternary structure, homodimer.

The protein localises to the cytoplasm. It carries out the reaction guanosine(37) in tRNA + S-adenosyl-L-methionine = N(1)-methylguanosine(37) in tRNA + S-adenosyl-L-homocysteine + H(+). In terms of biological role, specifically methylates guanosine-37 in various tRNAs. This is tRNA (guanine-N(1)-)-methyltransferase from Thermobifida fusca (strain YX).